A 250-amino-acid chain; its full sequence is N-acyl homoserine lactonase (250 aa).

Residues His-104, His-106, Asp-108, His-109, His-169, Asp-191, and His-235 each coordinate Zn(2+).

This sequence belongs to the metallo-beta-lactamase superfamily. As to quaternary structure, monomer. Zn(2+) serves as cofactor.

It catalyses the reaction an N-acyl-L-homoserine lactone + H2O = an N-acyl-L-homoserine + H(+). The protein is N-acyl homoserine lactonase of Bacillus cereus.